The chain runs to 215 residues: Cytochrome b6 (215 aa).

Over Met1–Asn31 the chain is Cytoplasmic. A helical transmembrane segment spans residues Ile32–Phe52. Cys35 lines the heme c pocket. Residues Ala53–Ser89 are Lumenal, thylakoid-facing. Residues Arg83, His86, His100, and Arg103 each coordinate heme b. Residues Ala90 to Phe110 traverse the membrane as a helical segment. Topologically, residues Lys111–Glu115 are cytoplasmic. Residues Leu116 to Tyr136 traverse the membrane as a helical segment. Over Ser137–Ser185 the chain is Lumenal, thylakoid. Residues Ala186 to Ile206 traverse the membrane as a helical segment. Residues His187 and His202 each coordinate heme b. The Cytoplasmic portion of the chain corresponds to Arg207 to Leu215. Lys208 contacts heme c.

It belongs to the cytochrome b family. PetB subfamily. The 4 large subunits of the cytochrome b6-f complex are cytochrome b6, subunit IV (17 kDa polypeptide, PetD), cytochrome f and the Rieske protein, while the 4 small subunits are PetG, PetL, PetM and PetN. The complex functions as a dimer. Heme b is required as a cofactor. Heme c serves as cofactor.

Its subcellular location is the cellular thylakoid membrane. Component of the cytochrome b6-f complex, which mediates electron transfer between photosystem II (PSII) and photosystem I (PSI), cyclic electron flow around PSI, and state transitions. This chain is Cytochrome b6, found in Mastigocladus laminosus (Fischerella sp.).